The primary structure comprises 141 residues: U1 small nuclear ribonucleoprotein C (141 aa).

Residues 4–36 (YYCEYCDKYLTHDSPSVRKSHTIGKVHQQAVTL) form a Matrin-type zinc finger. The interval 69–141 (LLPPNMVPGQ…SNSPPSNNDQ (73 aa)) is disordered. Positions 83–97 (MMPPGQFPFPPPPGQ) are enriched in pro residues. 2 stretches are compositionally biased toward low complexity: residues 100–110 (GGMPPHQQQPM) and 124–141 (QQSAQQFNSNSPPSNNDQ).

It belongs to the U1 small nuclear ribonucleoprotein C family. Component of the U1 snRNP. The U1 snRNP is composed of the U1 snRNA and the 7 core Sm proteins SNRPB, SNRPD1, SNRPD2, SNRPD3, SNRPE, SNRPF and SNRPG that assemble in a heptameric protein ring on the Sm site of the small nuclear RNA to form the core snRNP, and at least 3 U1 snRNP-specific proteins SNRNP70/U1-70K, SNRPA/U1-A and SNRPC/U1-C. SNRPC/U1-C interacts with U1 snRNA and the 5' splice-site region of the pre-mRNA.

It localises to the nucleus. Component of the spliceosomal U1 snRNP, which is essential for recognition of the pre-mRNA 5' splice-site and the subsequent assembly of the spliceosome. SNRPC/U1-C is directly involved in initial 5' splice-site recognition for both constitutive and regulated alternative splicing. The interaction with the 5' splice-site seems to precede base-pairing between the pre-mRNA and the U1 snRNA. Stimulates commitment or early (E) complex formation by stabilizing the base pairing of the 5' end of the U1 snRNA and the 5' splice-site region. The polypeptide is U1 small nuclear ribonucleoprotein C (Heterostelium pallidum (strain ATCC 26659 / Pp 5 / PN500) (Cellular slime mold)).